Reading from the N-terminus, the 332-residue chain is Anthranilate phosphoribosyltransferase (332 aa).

5-phospho-alpha-D-ribose 1-diphosphate contacts are provided by residues G79, 82–83 (GD), T87, 89–92 (NIST), 107–115 (KHGNRGVSS), and S119. Residue G79 coordinates anthranilate. Residue S91 coordinates Mg(2+). N110 serves as a coordination point for anthranilate. Anthranilate is bound at residue R165. Mg(2+)-binding residues include D223 and E224.

Belongs to the anthranilate phosphoribosyltransferase family. Homodimer. Mg(2+) serves as cofactor.

It carries out the reaction N-(5-phospho-beta-D-ribosyl)anthranilate + diphosphate = 5-phospho-alpha-D-ribose 1-diphosphate + anthranilate. It participates in amino-acid biosynthesis; L-tryptophan biosynthesis; L-tryptophan from chorismate: step 2/5. In terms of biological role, catalyzes the transfer of the phosphoribosyl group of 5-phosphorylribose-1-pyrophosphate (PRPP) to anthranilate to yield N-(5'-phosphoribosyl)-anthranilate (PRA). This Vibrio cholerae serotype O1 (strain ATCC 39541 / Classical Ogawa 395 / O395) protein is Anthranilate phosphoribosyltransferase.